The primary structure comprises 77 residues: uncharacterized protein (77 aa).

A compositionally biased stretch (basic residues) spans 1-10; that stretch reads MFNNKGRRNV. The segment at 1–21 is disordered; it reads MFNNKGRRNVRNNEVRRNVPV. The segment covering 11 to 21 has biased composition (basic and acidic residues); it reads RNNEVRRNVPV. Residues 20–77 enclose the TRAM domain; the sequence is PVKEGETYTVTIEDMGRGGDGIARVEGFVVFVPETQKGETVNVKITAVKSKFAFAEKI.

This is an uncharacterized protein from Methanocaldococcus jannaschii (strain ATCC 43067 / DSM 2661 / JAL-1 / JCM 10045 / NBRC 100440) (Methanococcus jannaschii).